Consider the following 424-residue polypeptide: Serine--tRNA ligase (424 aa).

230–232 (TAE) lines the L-serine pocket. Position 261-263 (261-263 (RSE)) interacts with ATP. E284 provides a ligand contact to L-serine. 348–351 (EISS) contacts ATP. S382 contributes to the L-serine binding site.

Belongs to the class-II aminoacyl-tRNA synthetase family. Type-1 seryl-tRNA synthetase subfamily. Homodimer. The tRNA molecule binds across the dimer.

It is found in the cytoplasm. The enzyme catalyses tRNA(Ser) + L-serine + ATP = L-seryl-tRNA(Ser) + AMP + diphosphate + H(+). It catalyses the reaction tRNA(Sec) + L-serine + ATP = L-seryl-tRNA(Sec) + AMP + diphosphate + H(+). It functions in the pathway aminoacyl-tRNA biosynthesis; selenocysteinyl-tRNA(Sec) biosynthesis; L-seryl-tRNA(Sec) from L-serine and tRNA(Sec): step 1/1. Catalyzes the attachment of serine to tRNA(Ser). Is also able to aminoacylate tRNA(Sec) with serine, to form the misacylated tRNA L-seryl-tRNA(Sec), which will be further converted into selenocysteinyl-tRNA(Sec). The protein is Serine--tRNA ligase of Solibacter usitatus (strain Ellin6076).